The chain runs to 236 residues: CBS domain-containing protein CBSX1, chloroplastic (236 aa).

A chloroplast-targeting transit peptide spans 1-53 (MDAVLYSVPLSFTPLRASSSPSSPYLLLPRFLSVQPCHKFTFSRSFPSKSRIP). The segment at 47 to 66 (PSKSRIPSASSAAGSTLMTN) is disordered. Ser-54 carries the post-translational modification N-acetylserine. CBS domains are found at residues 81-142 (MTKK…GRTE) and 175-231 (MTPA…IKRS).

The protein resides in the plastid. Its subcellular location is the chloroplast. The sequence is that of CBS domain-containing protein CBSX1, chloroplastic (CBSX1) from Arabidopsis thaliana (Mouse-ear cress).